We begin with the raw amino-acid sequence, 98 residues long: Complement inhibitor RaCI2 (98 aa).

The signal sequence occupies residues 1–21 (MNAVTVLAFTAFALIVHDCYS). 3 cysteine pairs are disulfide-bonded: cysteine 35-cysteine 59, cysteine 40-cysteine 61, and cysteine 55-cysteine 76.

It belongs to the RaCI family. As to expression, expressed in salivary glands.

The protein resides in the secreted. Complement inhibitor. Prevents complement-mediated C5 activation by binding to C5. Binds C5 at a different binding site than the other tick complement inhibitors OmCI and CirpT1, and the drug eculizumab. The polypeptide is Complement inhibitor RaCI2 (Rhipicephalus microplus (Cattle tick)).